A 293-amino-acid polypeptide reads, in one-letter code: Ribosomal protein L11 methyltransferase (293 aa).

Residues T145, G166, D188, and N230 each coordinate S-adenosyl-L-methionine.

The protein belongs to the methyltransferase superfamily. PrmA family.

The protein resides in the cytoplasm. It catalyses the reaction L-lysyl-[protein] + 3 S-adenosyl-L-methionine = N(6),N(6),N(6)-trimethyl-L-lysyl-[protein] + 3 S-adenosyl-L-homocysteine + 3 H(+). Its function is as follows. Methylates ribosomal protein L11. This Klebsiella pneumoniae subsp. pneumoniae (strain ATCC 700721 / MGH 78578) protein is Ribosomal protein L11 methyltransferase.